An 862-amino-acid chain; its full sequence is Glucans biosynthesis glucosyltransferase H (862 aa).

The disordered stretch occupies residues 1–25; sequence MELPATSGLNAQPGNAEGTTASTRP. Over residues 7-25 the composition is skewed to polar residues; that stretch reads SGLNAQPGNAEGTTASTRP. 5 helical membrane passes run 188-210, 545-567, 597-619, 626-648, and 708-730; these read RLTL…SSVL, GVMA…ALLA, ALFS…VLWA, GGAV…AAPV, and FLWW…VFSS.

It belongs to the glycosyltransferase 2 family. OpgH subfamily.

Its subcellular location is the cell inner membrane. Its pathway is glycan metabolism; osmoregulated periplasmic glucan (OPG) biosynthesis. Involved in the biosynthesis of osmoregulated periplasmic glucans (OPGs). The polypeptide is Glucans biosynthesis glucosyltransferase H (Ralstonia nicotianae (strain ATCC BAA-1114 / GMI1000) (Ralstonia solanacearum)).